We begin with the raw amino-acid sequence, 64 residues long: Large ribosomal subunit protein bL32 (64 aa).

Residues 1 to 20 (MALPKYKTSRANTHSRRANW) are disordered.

Belongs to the bacterial ribosomal protein bL32 family.

The protein is Large ribosomal subunit protein bL32 of Bifidobacterium adolescentis (strain ATCC 15703 / DSM 20083 / NCTC 11814 / E194a).